Here is a 342-residue protein sequence, read N- to C-terminus: Forkhead box protein D5-C (342 aa).

The disordered stretch occupies residues 1–89 (MNLSQDSSAH…KHSLDTTTNG (89 aa)). Over residues 20 to 34 (SDDEDEIDILGEDDP) the composition is skewed to acidic residues. Residues 59-70 (SKLSCNESASHS) show a composition bias toward polar residues. The segment covering 71 to 83 (SGERERGTSKHSL) has biased composition (basic and acidic residues). The fork-head DNA-binding region spans 97 to 191 (KPPYSYIALI…DNGSFLRRRK (95 aa)).

In terms of tissue distribution, at the onset of gastrulation, expressed in the superficial layer of cells in the dorsal blastopore lip (Spemann organizer). In the open neural plate, expressed in a row of cells destined to become the floor plate of the neural tube. After neural tube closure, only detected in the tailtip and a small area located at the midbrain/hindbrain boundary.

It is found in the nucleus. In terms of biological role, transcriptional repressor. This chain is Forkhead box protein D5-C (foxd5-c), found in Xenopus laevis (African clawed frog).